We begin with the raw amino-acid sequence, 457 residues long: ATP synthase subunit beta (457 aa).

An ATP-binding site is contributed by 147–154 (GGAGVGKT).

It belongs to the ATPase alpha/beta chains family. F-type ATPases have 2 components, CF(1) - the catalytic core - and CF(0) - the membrane proton channel. CF(1) has five subunits: alpha(3), beta(3), gamma(1), delta(1), epsilon(1). CF(0) has three main subunits: a(1), b(2) and c(9-12). The alpha and beta chains form an alternating ring which encloses part of the gamma chain. CF(1) is attached to CF(0) by a central stalk formed by the gamma and epsilon chains, while a peripheral stalk is formed by the delta and b chains.

It localises to the cell inner membrane. It carries out the reaction ATP + H2O + 4 H(+)(in) = ADP + phosphate + 5 H(+)(out). Produces ATP from ADP in the presence of a proton gradient across the membrane. The catalytic sites are hosted primarily by the beta subunits. In Haemophilus influenzae (strain PittGG), this protein is ATP synthase subunit beta.